The sequence spans 263 residues: Glucosamine-6-phosphate deaminase (263 aa).

The Proton acceptor; for enolization step role is filled by Asp67. Asn136 serves as the catalytic For ring-opening step. Residue His138 is the Proton acceptor; for ring-opening step of the active site. The active-site For ring-opening step is Glu143.

Belongs to the glucosamine/galactosamine-6-phosphate isomerase family. NagB subfamily. As to quaternary structure, homohexamer.

The enzyme catalyses alpha-D-glucosamine 6-phosphate + H2O = beta-D-fructose 6-phosphate + NH4(+). It participates in amino-sugar metabolism; N-acetylneuraminate degradation; D-fructose 6-phosphate from N-acetylneuraminate: step 5/5. Its function is as follows. Catalyzes the reversible isomerization-deamination of glucosamine 6-phosphate (GlcN6P) to form fructose 6-phosphate (Fru6P) and ammonium ion. The protein is Glucosamine-6-phosphate deaminase of Shewanella halifaxensis (strain HAW-EB4).